The primary structure comprises 908 residues: DNA mismatch repair protein MutS (908 aa).

ATP is bound at residue 629–636 (GPNMAGKS). The interval 822 to 863 (ADEADGAPSEDPPSEDPPSGDGVRAKKGEADAVPDLEDSQAN) is disordered.

The protein belongs to the DNA mismatch repair MutS family.

Functionally, this protein is involved in the repair of mismatches in DNA. It is possible that it carries out the mismatch recognition step. This protein has a weak ATPase activity. The chain is DNA mismatch repair protein MutS from Salinibacter ruber (strain DSM 13855 / M31).